We begin with the raw amino-acid sequence, 504 residues long: Anaerobic nitric oxide reductase transcription regulator NorR (504 aa).

Asp57 carries the post-translational modification 4-aspartylphosphate. The region spanning 187–416 (MIGLSPGMTQ…LEHAIHRAVV (230 aa)) is the Sigma-54 factor interaction domain. Residues 215 to 222 (GETGTGKE) and 278 to 287 (ADNGTLFLDE) contribute to the ATP site. Residues 479-498 (WAACARMLETDVANLHRLAK) constitute a DNA-binding region (H-T-H motif).

The protein operates within nitrogen metabolism; nitric oxide reduction. Its function is as follows. Required for the expression of anaerobic nitric oxide (NO) reductase, acts as a transcriptional activator for at least the norVW operon. Activation also requires sigma-54. The chain is Anaerobic nitric oxide reductase transcription regulator NorR from Escherichia coli O139:H28 (strain E24377A / ETEC).